The sequence spans 398 residues: Trans-2-enoyl-CoA reductase [NADH] (398 aa).

NAD(+) is bound by residues 47–52 (GASSGF), 74–75 (FE), 111–112 (DA), and 139–140 (LA). Tyrosine 225 provides a ligand contact to substrate. Tyrosine 235 functions as the Proton donor in the catalytic mechanism. Residues lysine 244 and 274–276 (IVT) each bind NAD(+).

This sequence belongs to the TER reductase family. As to quaternary structure, monomer.

It catalyses the reaction a 2,3-saturated acyl-CoA + NAD(+) = a (2E)-enoyl-CoA + NADH + H(+). Its pathway is lipid metabolism; fatty acid biosynthesis. Functionally, involved in the fatty acid synthesis (FAS II). Catalyzes the reduction of a carbon-carbon double bond in an enoyl moiety that is covalently linked to a coenzyme A (CoA). The chain is Trans-2-enoyl-CoA reductase [NADH] from Clostridium beijerinckii (strain ATCC 51743 / NCIMB 8052) (Clostridium acetobutylicum).